The primary structure comprises 325 residues: Tetraacyldisaccharide 4'-kinase (325 aa).

An ATP-binding site is contributed by 55 to 62; sequence TAGGNGKT.

It belongs to the LpxK family.

The catalysed reaction is a lipid A disaccharide + ATP = a lipid IVA + ADP + H(+). It participates in glycolipid biosynthesis; lipid IV(A) biosynthesis; lipid IV(A) from (3R)-3-hydroxytetradecanoyl-[acyl-carrier-protein] and UDP-N-acetyl-alpha-D-glucosamine: step 6/6. Functionally, transfers the gamma-phosphate of ATP to the 4'-position of a tetraacyldisaccharide 1-phosphate intermediate (termed DS-1-P) to form tetraacyldisaccharide 1,4'-bis-phosphate (lipid IVA). This Salmonella choleraesuis (strain SC-B67) protein is Tetraacyldisaccharide 4'-kinase.